The chain runs to 902 residues: Protein translocase subunit SecA (902 aa).

ATP contacts are provided by residues Q87, 105–109 (GEGKT), and D512. Disordered stretches follow at residues 565–584 (RRID…PGSS) and 840–902 (VEEQ…GKLK). Composition is skewed to basic and acidic residues over residues 840–859 (VEEQ…HEDA) and 873–882 (QVREGAKVGR). Residues C886, C888, C897, and H898 each contribute to the Zn(2+) site. Basic residues predominate over residues 892–902 (KKYKQCHGKLK).

This sequence belongs to the SecA family. As to quaternary structure, monomer and homodimer. Part of the essential Sec protein translocation apparatus which comprises SecA, SecYEG and auxiliary proteins SecDF-YajC and YidC. Zn(2+) serves as cofactor.

The protein localises to the cell inner membrane. The protein resides in the cytoplasm. The enzyme catalyses ATP + H2O + cellular proteinSide 1 = ADP + phosphate + cellular proteinSide 2.. Part of the Sec protein translocase complex. Interacts with the SecYEG preprotein conducting channel. Has a central role in coupling the hydrolysis of ATP to the transfer of proteins into and across the cell membrane, serving both as a receptor for the preprotein-SecB complex and as an ATP-driven molecular motor driving the stepwise translocation of polypeptide chains across the membrane. This is Protein translocase subunit SecA from Alteromonas mediterranea (strain DSM 17117 / CIP 110805 / LMG 28347 / Deep ecotype).